Here is a 375-residue protein sequence, read N- to C-terminus: Histidine biosynthesis bifunctional protein HisB (375 aa).

The histidinol-phosphatase stretch occupies residues 1–168 (MTPILFVDRD…GIAHELADAP (168 aa)). Asp-8 acts as the Nucleophile in catalysis. The Mg(2+) site is built by Asp-8, Asp-10, and Asp-128. The Proton donor role is filled by Asp-10. The interval 169–375 (RRALVQRNTK…TALPTTKGTL (207 aa)) is imidazoleglycerol-phosphate dehydratase.

The protein in the N-terminal section; belongs to the histidinol-phosphatase family. This sequence in the C-terminal section; belongs to the imidazoleglycerol-phosphate dehydratase family. It depends on Mg(2+) as a cofactor.

Its subcellular location is the cytoplasm. It catalyses the reaction D-erythro-1-(imidazol-4-yl)glycerol 3-phosphate = 3-(imidazol-4-yl)-2-oxopropyl phosphate + H2O. The enzyme catalyses L-histidinol phosphate + H2O = L-histidinol + phosphate. It participates in amino-acid biosynthesis; L-histidine biosynthesis; L-histidine from 5-phospho-alpha-D-ribose 1-diphosphate: step 6/9. The protein operates within amino-acid biosynthesis; L-histidine biosynthesis; L-histidine from 5-phospho-alpha-D-ribose 1-diphosphate: step 8/9. The protein is Histidine biosynthesis bifunctional protein HisB of Xanthomonas axonopodis pv. citri (strain 306).